The sequence spans 413 residues: Serine hydroxymethyltransferase (413 aa).

(6S)-5,6,7,8-tetrahydrofolate contacts are provided by residues L117 and 121-123 (GHL). Residue K226 is modified to N6-(pyridoxal phosphate)lysine. (6S)-5,6,7,8-tetrahydrofolate is bound by residues E239 and 349 to 351 (SPF).

This sequence belongs to the SHMT family. As to quaternary structure, homodimer. Pyridoxal 5'-phosphate is required as a cofactor.

The protein localises to the cytoplasm. It carries out the reaction (6R)-5,10-methylene-5,6,7,8-tetrahydrofolate + glycine + H2O = (6S)-5,6,7,8-tetrahydrofolate + L-serine. The protein operates within one-carbon metabolism; tetrahydrofolate interconversion. It functions in the pathway amino-acid biosynthesis; glycine biosynthesis; glycine from L-serine: step 1/1. Its function is as follows. Catalyzes the reversible interconversion of serine and glycine with tetrahydrofolate (THF) serving as the one-carbon carrier. This reaction serves as the major source of one-carbon groups required for the biosynthesis of purines, thymidylate, methionine, and other important biomolecules. Also exhibits THF-independent aldolase activity toward beta-hydroxyamino acids, producing glycine and aldehydes, via a retro-aldol mechanism. This is Serine hydroxymethyltransferase from Bacillus cereus (strain ATCC 10987 / NRS 248).